The following is a 489-amino-acid chain: Glutamate--tRNA ligase (489 aa).

Residues Pro12 to Met22 carry the 'HIGH' region motif. The 'KMSKS' region motif lies at Lys256–Arg260. Position 259 (Lys259) interacts with ATP.

The protein belongs to the class-I aminoacyl-tRNA synthetase family. Glutamate--tRNA ligase type 1 subfamily. Monomer.

The protein resides in the cytoplasm. The catalysed reaction is tRNA(Glu) + L-glutamate + ATP = L-glutamyl-tRNA(Glu) + AMP + diphosphate. Catalyzes the attachment of glutamate to tRNA(Glu) in a two-step reaction: glutamate is first activated by ATP to form Glu-AMP and then transferred to the acceptor end of tRNA(Glu). This Mycobacterium marinum (strain ATCC BAA-535 / M) protein is Glutamate--tRNA ligase.